The chain runs to 440 residues: Protein disulfide-isomerase A6 (440 aa).

An N-terminal signal peptide occupies residues 1 to 19 (MALLVLGLVSCTFFLAVNG). 2 Thioredoxin domains span residues 20 to 133 (LYSS…ALRQ) and 154 to 287 (SDSS…EDIA). Residues C55 and C58 each act as nucleophile in the active site. An intrachain disulfide couples C55 to C58. S129 carries the post-translational modification Phosphoserine. The tract at residues 141–161 (GRSGGYSSGKQGRSDSSSKKD) is disordered. A compositionally biased stretch (basic and acidic residues) spans 152-161 (GRSDSSSKKD). S156 carries the post-translational modification Phosphoserine; by FAM20C. S158 is subject to Phosphoserine. Residues C190 and C193 each act as nucleophile in the active site. An intrachain disulfide couples C190 to C193. A Phosphoserine modification is found at S428. A Prevents secretion from ER motif is present at residues 437–440 (KDEL).

This sequence belongs to the protein disulfide isomerase family. In terms of assembly, part of a large chaperone multiprotein complex comprising DNAJB11, HSP90B1, HSPA5, HYOU, PDIA2, PDIA4, PDIA6, PPIB, SDF2L1, UGGT1 and very small amounts of ERP29, but not, or at very low levels, CALR nor CANX. Interacts with MICA on the surface of tumor cells, leading to MICA disulfide bond reduction which is required for its release from tumor cells. Interacts with ITGB3 following platelet stimulation. Interacts with ERN1; the interaction is direct. Interacts with EIF2AK3. As to expression, expressed in platelets (at protein level).

Its subcellular location is the endoplasmic reticulum lumen. It localises to the cell membrane. It is found in the melanosome. It carries out the reaction Catalyzes the rearrangement of -S-S- bonds in proteins.. Its function is as follows. May function as a chaperone that inhibits aggregation of misfolded proteins. Negatively regulates the unfolded protein response (UPR) through binding to UPR sensors such as ERN1, which in turn inactivates ERN1 signaling. May also regulate the UPR via the EIF2AK3 UPR sensor. Plays a role in platelet aggregation and activation by agonists such as convulxin, collagen and thrombin. The protein is Protein disulfide-isomerase A6 (PDIA6) of Homo sapiens (Human).